A 105-amino-acid chain; its full sequence is Met repressor (105 aa).

Belongs to the MetJ family. Homodimer.

The protein resides in the cytoplasm. Functionally, this regulatory protein, when combined with SAM (S-adenosylmethionine) represses the expression of the methionine regulon and of enzymes involved in SAM synthesis. This is Met repressor from Shigella boydii serotype 18 (strain CDC 3083-94 / BS512).